The chain runs to 591 residues: MALDPTKHADWEIAQDAEKDMLTIYEIGEKLGLTKEELLPQGHYIAKIDFRAVLARLKDKPDGKYIDVTAITPTPLGEGKSTSSMGLVQGLGKLGKSVCAAIRQPSGGPTMNIKGSAAGGGLAQCIPLTPFSLGFTGDINAIMNAHNLAMVALTSRMQHERNYTDEQLERLSGMKRIDIDPTRVEMGWIMDFCCQSLRNIIIGIDGVNGKSDGYMMKSKFGIAVSSEVMAILAVAKDLKDMRERMGKIVVAYTKKGKPVTTEDLQVAGAMTAWMVDALNPSLIQTLEGQPVLVHAGPFANIAIGQSSIIADRVGLKLADYHVTESGFGADIGFEKFWNLKCRFSGLKPDCAVIVATIRALKCHGGAPVPVPGKPMPEEYNTESVEWVEKGCANLLHHIRNVRKAGISPVVCINAFYSDTDAEIAKVRELSEAEGARVALSRHWEKGGDGAIEFAETVIEACEEETEFKFLYELDMPLKERIELIAKEVYGADGVDYSNEANASLARIQADPELAKLGMCMVKTHLSLSDNPSLKGVPTGWRLMIREVLTYGGAGFIVPVAGTISLMPGTGSNPAFKRVDVDCETGKVEGVF.

74-81 lines the ATP pocket; the sequence is TPLGEGKS.

The protein belongs to the formate--tetrahydrofolate ligase family.

It catalyses the reaction (6S)-5,6,7,8-tetrahydrofolate + formate + ATP = (6R)-10-formyltetrahydrofolate + ADP + phosphate. Its pathway is one-carbon metabolism; tetrahydrofolate interconversion. In Desulforapulum autotrophicum (strain ATCC 43914 / DSM 3382 / VKM B-1955 / HRM2) (Desulfobacterium autotrophicum), this protein is Formate--tetrahydrofolate ligase.